Here is a 262-residue protein sequence, read N- to C-terminus: Ribose-5-phosphate isomerase A (262 aa).

Substrate-binding positions include 33-36, 89-92, and 102-105; these read TGST, DGAD, and KGGG. Glu111 (proton acceptor) is an active-site residue. Lys129 is a binding site for substrate.

It belongs to the ribose 5-phosphate isomerase family. In terms of assembly, homodimer.

The catalysed reaction is aldehydo-D-ribose 5-phosphate = D-ribulose 5-phosphate. Its pathway is carbohydrate degradation; pentose phosphate pathway; D-ribose 5-phosphate from D-ribulose 5-phosphate (non-oxidative stage): step 1/1. Catalyzes the reversible conversion of ribose-5-phosphate to ribulose 5-phosphate. This Ruegeria pomeroyi (strain ATCC 700808 / DSM 15171 / DSS-3) (Silicibacter pomeroyi) protein is Ribose-5-phosphate isomerase A.